A 311-amino-acid chain; its full sequence is tRNA-cytidine(32) 2-sulfurtransferase (311 aa).

Residues 47 to 52 (SGGKDS) carry the PP-loop motif motif. Residues C122, C125, and C213 each contribute to the [4Fe-4S] cluster site.

The protein belongs to the TtcA family. In terms of assembly, homodimer. Mg(2+) serves as cofactor. [4Fe-4S] cluster is required as a cofactor.

It localises to the cytoplasm. It carries out the reaction cytidine(32) in tRNA + S-sulfanyl-L-cysteinyl-[cysteine desulfurase] + AH2 + ATP = 2-thiocytidine(32) in tRNA + L-cysteinyl-[cysteine desulfurase] + A + AMP + diphosphate + H(+). It participates in tRNA modification. Its function is as follows. Catalyzes the ATP-dependent 2-thiolation of cytidine in position 32 of tRNA, to form 2-thiocytidine (s(2)C32). The sulfur atoms are provided by the cysteine/cysteine desulfurase (IscS) system. The chain is tRNA-cytidine(32) 2-sulfurtransferase from Salmonella paratyphi B (strain ATCC BAA-1250 / SPB7).